Consider the following 243-residue polypeptide: Membrane selenoprotein (243 aa).

The tract at residues 12 to 63 (GEDCEGGVUARPSSSSSSINNASDESTPLISKTNDEEKANIGISSTSNSPQE) is disordered. U20 is a non-standard amino acid (selenocysteine). Polar residues-rich tracts occupy residues 30–43 (INNA…LISK) and 53–63 (GISSTSNSPQE). 4 helical membrane-spanning segments follow: residues 74-94 (ILTL…PVLI), 102-122 (VSAG…LSIL), 144-164 (IKFG…FDIL), and 199-219 (VMGW…LLVG). U88 is a non-standard amino acid (selenocysteine).

The protein localises to the membrane. In Dictyostelium discoideum (Social amoeba), this protein is Membrane selenoprotein (msp).